The sequence spans 49 residues: SPbeta prophage-derived uncharacterized protein YorN (49 aa).

The protein is SPbeta prophage-derived uncharacterized protein YorN (yorN) of Bacillus subtilis (strain 168).